We begin with the raw amino-acid sequence, 372 residues long: Actin-related protein 2/3 complex subunit 1B (372 aa).

WD repeat units follow at residues 6–45, 50–89, 94–135, 140–179, 242–280, and 324–367; these read FLVEPISCHAWNKDRTQIAICPNNHEVHIYEKSGAKWTKV, EHNGQVTGIDWAPESNRIVTCGTDRNAYVWTLKGRTWKPT, RINR…WVCK, PIRSTVLSLDWHPNNVLLAAGSCDFKCRIFSAYIKEVEER, SETLPLLALTFITDNSLVAAGHDCFPVLFTYDAAAGMLS, and LHKN…SALK.

Belongs to the WD repeat ARPC1 family. Component of the Arp2/3 complex composed of ACTR2/ARP2, ACTR3/ARP3, ARPC1B/p41-ARC, ARPC2/p34-ARC, ARPC3/p21-ARC, ARPC4/p20-ARC and ARPC5/p16-ARC.

It localises to the cytoplasm. The protein resides in the cytoskeleton. Its subcellular location is the nucleus. Component of the Arp2/3 complex, a multiprotein complex that mediates actin polymerization upon stimulation by nucleation-promoting factor (NPF). The Arp2/3 complex mediates the formation of branched actin networks in the cytoplasm, providing the force for cell motility. In addition to its role in the cytoplasmic cytoskeleton, the Arp2/3 complex also promotes actin polymerization in the nucleus, thereby regulating gene transcription and repair of damaged DNA. The Arp2/3 complex promotes homologous recombination (HR) repair in response to DNA damage by promoting nuclear actin polymerization, leading to drive motility of double-strand breaks (DSBs). This chain is Actin-related protein 2/3 complex subunit 1B, found in Homo sapiens (Human).